The primary structure comprises 84 residues: Small ribosomal subunit protein bS16 (84 aa).

The protein belongs to the bacterial ribosomal protein bS16 family.

The chain is Small ribosomal subunit protein bS16 from Methylococcus capsulatus (strain ATCC 33009 / NCIMB 11132 / Bath).